The primary structure comprises 172 residues: Biogenesis of lysosome-related organelles complex 1 subunit 6 (172 aa).

Disordered stretches follow at residues 1-36 (MSVP…SPDE) and 135-172 (RALK…AKRM). A coiled-coil region spans residues 63-167 (DLQRSKQALQ…FEREKQLTAR (105 aa)). Positions 143-164 (RQKEELEREQQREKEFEREKQL) are enriched in basic and acidic residues.

This sequence belongs to the BLOC1S6 family. As to quaternary structure, interacts with BLOC1S4 and DTNBP1/BLOC1S7. Homodimer. Component of the biogenesis of lysosome-related organelles complex 1 (BLOC-1) composed of BLOC1S1, BLOC1S2, BLOC1S3, BLOC1S4, BLOC1S5, BLOC1S6, DTNBP1/BLOC1S7 and SNAPIN/BLOC1S8. Octamer composed of one copy each BLOC1S1, BLOC1S2, BLOC1S3, BLOC1S4, BLOC1S5, BLOC1S6, DTNBP1/BLOC1S7 and SNAPIN/BLOC1S8. The BLOC-1 complex associates with the AP-3 protein complex and membrane protein cargos. Interacts with BLOC1S5, F-actin, SNAP25 isoform 1 and isoform 2, SNAP47 and STX12. Phosphorylated. As to expression, widely expressed.

It is found in the cytoplasm. The protein resides in the membrane. Functionally, component of the BLOC-1 complex, a complex that is required for normal biogenesis of lysosome-related organelles (LRO), such as platelet dense granules and melanosomes. In concert with the AP-3 complex, the BLOC-1 complex is required to target membrane protein cargos into vesicles assembled at cell bodies for delivery into neurites and nerve terminals. The BLOC-1 complex, in association with SNARE proteins, is also proposed to be involved in neurite extension. May play a role in intracellular vesicle trafficking, particularly in the vesicle-docking and fusion process. The protein is Biogenesis of lysosome-related organelles complex 1 subunit 6 (BLOC1S6) of Homo sapiens (Human).